Here is a 72-residue protein sequence, read N- to C-terminus: Translation initiation factor IF-1 (72 aa).

The 72-residue stretch at M1 to K72 folds into the S1-like domain.

It belongs to the IF-1 family. In terms of assembly, component of the 30S ribosomal translation pre-initiation complex which assembles on the 30S ribosome in the order IF-2 and IF-3, IF-1 and N-formylmethionyl-tRNA(fMet); mRNA recruitment can occur at any time during PIC assembly.

Its subcellular location is the cytoplasm. In terms of biological role, one of the essential components for the initiation of protein synthesis. Stabilizes the binding of IF-2 and IF-3 on the 30S subunit to which N-formylmethionyl-tRNA(fMet) subsequently binds. Helps modulate mRNA selection, yielding the 30S pre-initiation complex (PIC). Upon addition of the 50S ribosomal subunit IF-1, IF-2 and IF-3 are released leaving the mature 70S translation initiation complex. The chain is Translation initiation factor IF-1 from Acidiphilium cryptum (strain JF-5).